The sequence spans 382 residues: Adaptive-response sensory kinase SasA (382 aa).

Positions Met160–Arg382 constitute a Histidine kinase domain. His163 is subject to Phosphohistidine; by autocatalysis.

Homooligomerizes. Interacts with KaiC. Participates in the KaiABC clock complex, whose core is composed of a KaiC homohexamer, 6 KaiB and up to 6 KaiA dimers. SasA and KaiB(fs) compete to bind to KaiC.

It carries out the reaction ATP + protein L-histidine = ADP + protein N-phospho-L-histidine.. Functionally, member of the two-component regulatory system SasA/RpaA involved in genome-wide circadian gene expression. One of several clock output pathways. Participates in the Kai clock protein complex, the main circadian regulator in cyanobacteria, via its interaction with KaiC. KaiC enhances the autophosphorylation activity of SasA, which then transfers its phosphate group to RpaA to activate it. In addition to its output function, recruits fold-shifted KaiB (KaiB(fs)) to KaiC to cooperatively form the KaiB(6):KaiC(6) complex (independent of SasA kinase activity). Required for robustness of the circadian rhythm of gene expression and is involved in clock output, also required for adaptation to light/dark cycles. The sequence is that of Adaptive-response sensory kinase SasA from Crocosphaera subtropica (strain ATCC 51142 / BH68) (Cyanothece sp. (strain ATCC 51142)).